The sequence spans 602 residues: Elongation factor 4 (602 aa).

Residues 7-189 (KRVRNFSIIA…AVVEKVPYPK (183 aa)) form the tr-type G domain. GTP is bound by residues 19-24 (DHGKST) and 136-139 (NKID).

The protein belongs to the TRAFAC class translation factor GTPase superfamily. Classic translation factor GTPase family. LepA subfamily.

Its subcellular location is the cell membrane. It carries out the reaction GTP + H2O = GDP + phosphate + H(+). Required for accurate and efficient protein synthesis under certain stress conditions. May act as a fidelity factor of the translation reaction, by catalyzing a one-codon backward translocation of tRNAs on improperly translocated ribosomes. Back-translocation proceeds from a post-translocation (POST) complex to a pre-translocation (PRE) complex, thus giving elongation factor G a second chance to translocate the tRNAs correctly. Binds to ribosomes in a GTP-dependent manner. The chain is Elongation factor 4 from Clostridium tetani (strain Massachusetts / E88).